A 229-amino-acid chain; its full sequence is Germin-like protein 2-4 (229 aa).

Positions 1–23 (MAHRRRCLLLLLAVLLPAMAARG) are cleaved as a signal peptide. The cysteines at positions 32 and 52 are disulfide-linked. N-linked (GlcNAc...) asparagine glycosylation is present at N57. Residues 66–213 (SGVRAAGNFS…AFGLTPAELR (148 aa)) enclose the Cupin type-1 domain. Mn(2+) contacts are provided by H115, H117, E122, and H161.

Belongs to the germin family. As to quaternary structure, oligomer (believed to be a pentamer but probably hexamer).

The protein localises to the secreted. It localises to the extracellular space. Its subcellular location is the apoplast. Its function is as follows. May play a role in plant defense. Probably has no oxalate oxidase activity even if the active site is conserved. The sequence is that of Germin-like protein 2-4 from Oryza sativa subsp. japonica (Rice).